Reading from the N-terminus, the 148-residue chain is Small ribosomal subunit protein uS15 (148 aa).

A disordered region spans residues 1–23; the sequence is MRKSKEKGRSGSTRPPQLKKPEW.

Belongs to the universal ribosomal protein uS15 family. As to quaternary structure, part of the 30S ribosomal subunit.

The polypeptide is Small ribosomal subunit protein uS15 (Thermofilum pendens (strain DSM 2475 / Hrk 5)).